We begin with the raw amino-acid sequence, 62 residues long: Photosystem II reaction center protein Z (62 aa).

The next 2 membrane-spanning stretches (helical) occupy residues Leu8–Ser28 and Trp41–Val61.

It belongs to the PsbZ family. In terms of assembly, PSII is composed of 1 copy each of membrane proteins PsbA, PsbB, PsbC, PsbD, PsbE, PsbF, PsbH, PsbI, PsbJ, PsbK, PsbL, PsbM, PsbT, PsbX, PsbY, PsbZ, Psb30/Ycf12, peripheral proteins PsbO, CyanoQ (PsbQ), PsbU, PsbV and a large number of cofactors. It forms dimeric complexes.

It is found in the cellular thylakoid membrane. Functionally, may control the interaction of photosystem II (PSII) cores with the light-harvesting antenna, regulates electron flow through the 2 photosystem reaction centers. PSII is a light-driven water plastoquinone oxidoreductase, using light energy to abstract electrons from H(2)O, generating a proton gradient subsequently used for ATP formation. This Acaryochloris marina (strain MBIC 11017) protein is Photosystem II reaction center protein Z.